Here is a 303-residue protein sequence, read N- to C-terminus: N-acetylmuramic acid 6-phosphate etherase (303 aa).

Residues 62-225 (IVAAFRQGGR…TTASMVLLGK (164 aa)) enclose the SIS domain. Glu90 serves as the catalytic Proton donor. The active site involves Glu121.

This sequence belongs to the GCKR-like family. MurNAc-6-P etherase subfamily. As to quaternary structure, homodimer.

It catalyses the reaction N-acetyl-D-muramate 6-phosphate + H2O = N-acetyl-D-glucosamine 6-phosphate + (R)-lactate. It participates in amino-sugar metabolism; 1,6-anhydro-N-acetylmuramate degradation. Its pathway is amino-sugar metabolism; N-acetylmuramate degradation. The protein operates within cell wall biogenesis; peptidoglycan recycling. In terms of biological role, specifically catalyzes the cleavage of the D-lactyl ether substituent of MurNAc 6-phosphate, producing GlcNAc 6-phosphate and D-lactate. Together with AnmK, is also required for the utilization of anhydro-N-acetylmuramic acid (anhMurNAc) either imported from the medium or derived from its own cell wall murein, and thus plays a role in cell wall recycling. In Histophilus somni (strain 129Pt) (Haemophilus somnus), this protein is N-acetylmuramic acid 6-phosphate etherase.